We begin with the raw amino-acid sequence, 445 residues long: Selenocysteine lyase (445 aa).

The residue at position 1 (methionine 1) is an N-acetylmethionine. Positions 1 to 28 (MEAAVAPGRDAPAPAASQPSGCGKHNSP) are disordered. Serine 129 is subject to Phosphoserine. Residue lysine 259 is modified to N6-(pyridoxal phosphate)lysine. The active-site S-selanylcysteine intermediate is the cysteine 388.

This sequence belongs to the class-V pyridoxal-phosphate-dependent aminotransferase family. As to quaternary structure, homodimer. Requires pyridoxal 5'-phosphate as cofactor.

The protein localises to the cytoplasm. It localises to the cytosol. It carries out the reaction L-selenocysteine + AH2 = hydrogenselenide + L-alanine + A + H(+). In terms of biological role, catalyzes the decomposition of L-selenocysteine to L-alanine and elemental selenium. The polypeptide is Selenocysteine lyase (SCLY) (Homo sapiens (Human)).